We begin with the raw amino-acid sequence, 246 residues long: Pyridoxine 5'-phosphate synthase (246 aa).

Asn12 serves as a coordination point for 3-amino-2-oxopropyl phosphate. 1-deoxy-D-xylulose 5-phosphate is bound at residue 14-15 (DH). A 3-amino-2-oxopropyl phosphate-binding site is contributed by Arg23. The Proton acceptor role is filled by His48. Residues Arg50 and His55 each contribute to the 1-deoxy-D-xylulose 5-phosphate site. Glu75 functions as the Proton acceptor in the catalytic mechanism. 1-deoxy-D-xylulose 5-phosphate is bound at residue Thr105. Residue His196 is the Proton donor of the active site. Residues Gly197 and 218–219 (GH) each bind 3-amino-2-oxopropyl phosphate.

This sequence belongs to the PNP synthase family. As to quaternary structure, homooctamer; tetramer of dimers.

It is found in the cytoplasm. It catalyses the reaction 3-amino-2-oxopropyl phosphate + 1-deoxy-D-xylulose 5-phosphate = pyridoxine 5'-phosphate + phosphate + 2 H2O + H(+). It participates in cofactor biosynthesis; pyridoxine 5'-phosphate biosynthesis; pyridoxine 5'-phosphate from D-erythrose 4-phosphate: step 5/5. Functionally, catalyzes the complicated ring closure reaction between the two acyclic compounds 1-deoxy-D-xylulose-5-phosphate (DXP) and 3-amino-2-oxopropyl phosphate (1-amino-acetone-3-phosphate or AAP) to form pyridoxine 5'-phosphate (PNP) and inorganic phosphate. The sequence is that of Pyridoxine 5'-phosphate synthase from Pseudomonas putida (strain ATCC 47054 / DSM 6125 / CFBP 8728 / NCIMB 11950 / KT2440).